A 386-amino-acid polypeptide reads, in one-letter code: Indole-3-acetate O-methyltransferase 1 (386 aa).

Y30 is a binding site for S-adenosyl-L-methionine. Substrate is bound by residues Y30 and 33–37 (NSQAQ). Residues G72, 72–73 (GC), N78, 108–111 (FSDL), D110, 152–154 (SFY), and 169–171 (AFS) each bind S-adenosyl-L-methionine. 170 to 174 (FSLHW) serves as a coordination point for substrate. 6 residues coordinate Mg(2+): N191, V195, R277, D278, F280, and N281. S334 contributes to the substrate binding site.

It belongs to the methyltransferase superfamily. SABATH family. Homodimer. It depends on Mg(2+) as a cofactor. In terms of tissue distribution, expressed in seedling roots and leaves. Expressed in the stigma, funiculus, and vascular bundles in sepals, petals and stamens.

The enzyme catalyses (indol-3-yl)acetate + S-adenosyl-L-methionine = methyl (indol-3-yl)acetate + S-adenosyl-L-homocysteine. Catalyzes the methylation of the free carboxyl end of the plant hormone indole-3-acetic acid (IAA). Converts IAA to IAA methyl ester (MeIAA). Regulates IAA activities by IAA methylation. Methylation of IAA plays an important role in regulating plant development and auxin homeostasis. Required for correct leaf pattern formation. MeIAA seems to be an inactive form of IAA. The polypeptide is Indole-3-acetate O-methyltransferase 1 (IAMT1) (Arabidopsis thaliana (Mouse-ear cress)).